Reading from the N-terminus, the 436-residue chain is Glutamyl-tRNA reductase (436 aa).

Substrate-binding positions include 49-52, serine 109, 114-116, and glutamine 120; these read TCNR and EGQ. Cysteine 50 functions as the Nucleophile in the catalytic mechanism. NADP(+) is bound at residue 198-203; the sequence is GAGRMS.

The protein belongs to the glutamyl-tRNA reductase family. As to quaternary structure, homodimer.

The catalysed reaction is (S)-4-amino-5-oxopentanoate + tRNA(Glu) + NADP(+) = L-glutamyl-tRNA(Glu) + NADPH + H(+). It participates in porphyrin-containing compound metabolism; protoporphyrin-IX biosynthesis; 5-aminolevulinate from L-glutamyl-tRNA(Glu): step 1/2. It functions in the pathway porphyrin-containing compound metabolism; chlorophyll biosynthesis. Functionally, catalyzes the NADPH-dependent reduction of glutamyl-tRNA(Glu) to glutamate 1-semialdehyde (GSA). This is Glutamyl-tRNA reductase from Prochlorococcus marinus (strain AS9601).